The chain runs to 330 residues: Clp protease adapter protein ClpF, chloroplastic (330 aa).

The transit peptide at 1 to 65 directs the protein to the chloroplast; it reads MVQSQSLSTL…KSLKQRNLLR (65 aa). The NTD, required for CLPS1-binding stretch occupies residues 66 to 138; the sequence is VEARWPFQGG…VEEESIRLQE (73 aa). Coiled-coil stretches lie at residues 112–139 and 175–195; these read NLEQYDIAQQLREKLTEVEEESIRLQEG and AAKLRDEISKLEAESLAVSAK. Residues 153-188 enclose the UVR domain; sequence GISIIRLRADLQNAIDSEDYGLAAKLRDEISKLEAE. The tract at residues 203–310 is yccV-like; sequence EYAFRLGQKL…TAGDFIPVKQ (108 aa).

In terms of assembly, binds to CLPC1 and CLPC2. Interacts with ClpS1; this interaction stimulates their association with ClpC. Associates with the Clp substrate HEMA1 (GluTR). In terms of tissue distribution, expressed constitutively in photosynthetic tissues such as leaves, stems and flowers, and, at low levels, in siliques.

The protein resides in the plastid. Its subcellular location is the chloroplast. Functionally, clp protease adapter that facilitates CLPS1 recruitment to ClpC chaperones thus forming a binary adapter for selective substrate recognition and delivery to plastid Clp protease system (CLPC). This is Clp protease adapter protein ClpF, chloroplastic from Arabidopsis thaliana (Mouse-ear cress).